Here is a 313-residue protein sequence, read N- to C-terminus: Putative serine protease 29 (313 aa).

Residues 1–22 (MPTTPDPGSEPPARTPRPPPLT) show a composition bias toward pro residues. The interval 1–27 (MPTTPDPGSEPPARTPRPPPLTPGLSP) is disordered. A Peptidase S1 domain is found at 68–310 (IVGGHNAPPG…YVPWILQQVG (243 aa)). Cysteine 99 and cysteine 115 are joined by a disulfide. Histidine 114 (charge relay system) is an active-site residue. Asparagine 143 carries an N-linked (GlcNAc...) asparagine glycan. The active-site Charge relay system is the aspartate 161. 3 cysteine pairs are disulfide-bonded: cysteine 193/cysteine 268, cysteine 226/cysteine 249, and cysteine 258/cysteine 286. Serine 262 acts as the Charge relay system in catalysis.

Belongs to the peptidase S1 family.

The protein resides in the secreted. This Homo sapiens (Human) protein is Putative serine protease 29 (PRSS29P).